Consider the following 504-residue polypeptide: Cholesterol 7-alpha-monooxygenase (504 aa).

Cysteine 444 contacts heme.

The protein belongs to the cytochrome P450 family. Heme is required as a cofactor.

The protein localises to the endoplasmic reticulum membrane. The protein resides in the microsome membrane. It catalyses the reaction cholesterol + reduced [NADPH--hemoprotein reductase] + O2 = 7alpha-hydroxycholesterol + oxidized [NADPH--hemoprotein reductase] + H2O + H(+). It functions in the pathway lipid metabolism; bile acid biosynthesis. Functionally, catalyzes a rate-limiting step in cholesterol catabolism and bile acid biosynthesis by introducing a hydrophilic moiety at position 7 of cholesterol. Important for cholesterol homeostasis. This chain is Cholesterol 7-alpha-monooxygenase (CYP7A1), found in Cricetulus griseus (Chinese hamster).